Consider the following 141-residue polypeptide: uncharacterized protein (141 aa).

It belongs to the peptidase C56 family.

This is an uncharacterized protein from Streptomyces lividans.